A 199-amino-acid polypeptide reads, in one-letter code: Recombination protein RecR (199 aa).

The C4-type zinc finger occupies 58–73 (CRRCFNLTEGEECDIC). The 96-residue stretch at 81-176 (SVICVVEDPY…RVTALASGLP (96 aa)) folds into the Toprim domain.

The protein belongs to the RecR family.

May play a role in DNA repair. It seems to be involved in an RecBC-independent recombinational process of DNA repair. It may act with RecF and RecO. The polypeptide is Recombination protein RecR (Rubrobacter xylanophilus (strain DSM 9941 / JCM 11954 / NBRC 16129 / PRD-1)).